The primary structure comprises 390 residues: MPSLRTERRSFGMETPRHSSFRMAEVLYVLSCGGQLEHPHMINVQYPVHQPGPTLRDVKTRLIALRGRGMPDSFSWSYKRNYKDTFIWCDLFDDNFILPLSESGEYALKATKRFDASQVKYLRPPRRSENLEAEGDVSMVVKKGLVLISDTGSVTSNRTMELNKQLMNSLSHSRSAAAVRNNEHSDVSSSDTHYSYEDVIERKDYPARCKSNSGATKRGKASVTPKQCHPSSRPAYWEFSPQGNRTGREDSLMTIGLTKHVVEENEGPTTPRAPARRRTWKKEIDKITIFRESNNSESSDDEQPSVQAETHVSKLSKSGGSYSAAPEDLFLYILRKATRLGSFKPRVCTEVDVVDSTQSKTKMLFRSKTKDEVNRLLYHSPLKQDQSIKK.

The segment at 22–115 (RMAEVLYVLS…YALKATKRFD (94 aa)) is DIX-like oligomerization domain. 2 disordered regions span residues 210–247 (KSNS…NRTG) and 291–321 (RESN…SGGS). Over residues 304-321 (PSVQAETHVSKLSKSGGS) the composition is skewed to polar residues.

Belongs to the SOSEKI family. As to quaternary structure, homodimer. Forms long polymer filaments with other SOKs proteins polymers crucial for polar localization and biological activity.

Its subcellular location is the cell membrane. In terms of biological role, SOSEKI proteins locally interpret global polarity cues and can influence cell division orientation to coordinate cell polarization relative to body axes. The sequence is that of Protein SOSEKI 4 from Physcomitrium patens (Spreading-leaved earth moss).